The chain runs to 54 residues: AEDRSSLSGVSDAEAKEFHALFVSSFTAFIVIAVLAHVLAWAWRPWIPGPKGWA.

Over 1 to 20 the chain is Cytoplasmic; it reads AEDRSSLSGVSDAEAKEFHA. A bacteriochlorophyll contacts are provided by histidine 19 and histidine 37. The helical transmembrane segment at 21–43 threads the bilayer; that stretch reads LFVSSFTAFIVIAVLAHVLAWAW. Over 44-54 the chain is Periplasmic; sequence RPWIPGPKGWA.

Belongs to the antenna complex beta subunit family. As to quaternary structure, the core complex is formed by different alpha and beta chains, binding bacteriochlorophyll molecules, and arranged most probably in tetrameric structures disposed around the reaction center. The non-pigmented gamma chains may constitute additional components.

It is found in the cell inner membrane. Functionally, antenna complexes are light-harvesting systems, which transfer the excitation energy to the reaction centers. In Rhodoblastus acidophilus (Rhodopseudomonas acidophila), this protein is Light-harvesting protein B-880 beta chain.